Consider the following 591-residue polypeptide: Potassium channel KAT4 (591 aa).

Residues Met1 to Arg32 lie on the Cytoplasmic side of the membrane. Residues Trp33 to Leu53 traverse the membrane as a helical segment. Over Ser54–Leu63 the chain is Extracellular. The chain crosses the membrane as a helical span at residues Val64–Val84. Over Ala85 to Pro109 the chain is Cytoplasmic. Residues Cys110 to Gly130 form a helical membrane-spanning segment. The Extracellular segment spans residues Lys131 to Gly137. A helical; Voltage-sensor transmembrane segment spans residues Leu138–Glu158. The Cytoplasmic segment spans residues Lys159–Lys172. A helical membrane pass occupies residues Leu173–Phe193. Residues Asn194–Thr220 are Extracellular-facing. Positions Cys221–Ala240 form an intramembrane region, pore-forming. Over Thr241 to Met246 the chain is Extracellular. A helical membrane pass occupies residues Leu247–Ile267. The Cytoplasmic portion of the chain corresponds to Thr268–Ser591. Residue Leu349–Tyr469 participates in a nucleoside 3',5'-cyclic phosphate binding. Residues Arg521–Ser591 form the KHA domain.

This sequence belongs to the potassium channel family. Plant (TC 1.A.1.4) subfamily.

It localises to the membrane. In terms of biological role, probable inward-rectifying potassium channel. Assuming opened or closed conformations in response to the voltage difference across the membrane, the channel is activated by hyperpolarization. The protein is Potassium channel KAT4 of Oryza sativa subsp. japonica (Rice).